A 255-amino-acid polypeptide reads, in one-letter code: Ribosomal RNA small subunit methyltransferase G 2 (255 aa).

Positions 90, 95, and 155 each coordinate S-adenosyl-L-methionine. A compositionally biased stretch (acidic residues) spans 233–245 (EDEGEELLMDELS). The interval 233-255 (EDEGEELLMDELSNEEKRRWAKY) is disordered. Positions 246 to 255 (NEEKRRWAKY) are enriched in basic and acidic residues.

This sequence belongs to the methyltransferase superfamily. RNA methyltransferase RsmG family.

Its subcellular location is the cytoplasm. It catalyses the reaction guanosine(527) in 16S rRNA + S-adenosyl-L-methionine = N(7)-methylguanosine(527) in 16S rRNA + S-adenosyl-L-homocysteine. Its function is as follows. Specifically methylates the N7 position of guanine in position 527 of 16S rRNA. This is Ribosomal RNA small subunit methyltransferase G 2 from Bdellovibrio bacteriovorus (strain ATCC 15356 / DSM 50701 / NCIMB 9529 / HD100).